Here is a 121-residue protein sequence, read N- to C-terminus: Small ribosomal subunit protein uS13 (121 aa).

The interval 97–121 (PVRGQKTHSNARTRKGPRASRIKKK) is disordered. Basic residues predominate over residues 101-121 (QKTHSNARTRKGPRASRIKKK).

It belongs to the universal ribosomal protein uS13 family. Part of the 30S ribosomal subunit. Forms a loose heterodimer with protein S19. Forms two bridges to the 50S subunit in the 70S ribosome.

In terms of biological role, located at the top of the head of the 30S subunit, it contacts several helices of the 16S rRNA. In the 70S ribosome it contacts the 23S rRNA (bridge B1a) and protein L5 of the 50S subunit (bridge B1b), connecting the 2 subunits; these bridges are implicated in subunit movement. Contacts the tRNAs in the A and P-sites. The polypeptide is Small ribosomal subunit protein uS13 (Kosmotoga olearia (strain ATCC BAA-1733 / DSM 21960 / TBF 19.5.1)).